A 143-amino-acid polypeptide reads, in one-letter code: ATP synthase subunit b' (143 aa).

Residues Ala-6–Phe-26 form a helical membrane-spanning segment.

The protein belongs to the ATPase B chain family. In terms of assembly, F-type ATPases have 2 components, F(1) - the catalytic core - and F(0) - the membrane proton channel. F(1) has five subunits: alpha(3), beta(3), gamma(1), delta(1), epsilon(1). F(0) has four main subunits: a(1), b(1), b'(1) and c(10-14). The alpha and beta chains form an alternating ring which encloses part of the gamma chain. F(1) is attached to F(0) by a central stalk formed by the gamma and epsilon chains, while a peripheral stalk is formed by the delta, b and b' chains.

It localises to the cellular thylakoid membrane. In terms of biological role, f(1)F(0) ATP synthase produces ATP from ADP in the presence of a proton or sodium gradient. F-type ATPases consist of two structural domains, F(1) containing the extramembraneous catalytic core and F(0) containing the membrane proton channel, linked together by a central stalk and a peripheral stalk. During catalysis, ATP synthesis in the catalytic domain of F(1) is coupled via a rotary mechanism of the central stalk subunits to proton translocation. Component of the F(0) channel, it forms part of the peripheral stalk, linking F(1) to F(0). The b'-subunit is a diverged and duplicated form of b found in plants and photosynthetic bacteria. The polypeptide is ATP synthase subunit b' (Microcystis aeruginosa (strain NIES-843 / IAM M-2473)).